A 287-amino-acid chain; its full sequence is Phycobilisome 32.1 kDa linker polypeptide, phycocyanin-associated, rod (287 aa).

The PBS-linker domain maps to 2–180 (AITAAASRLG…LYRGYANSDR (179 aa)). The 53-residue stretch at 235–287 (GRVYRIEVAGIRQPGYPGVRRSSTAFLVPYEQLSAKMQQLQRTGARIISVNPA) folds into the CpcD-like domain.

The protein belongs to the phycobilisome linker protein family.

It localises to the cellular thylakoid membrane. In terms of biological role, rod linker protein, associated with phycocyanin. Linker polypeptides determine the state of aggregation and the location of the disk-shaped phycobiliprotein units within the phycobilisome and modulate their spectroscopic properties in order to mediate a directed and optimal energy transfer. This chain is Phycobilisome 32.1 kDa linker polypeptide, phycocyanin-associated, rod (cpcC), found in Thermosynechococcus vestitus (strain NIES-2133 / IAM M-273 / BP-1).